The chain runs to 79 residues: Dolichol phosphate-mannose biosynthesis regulatory protein (79 aa).

2 consecutive transmembrane segments (helical) span residues 8–28 and 50–70; these read IGFVMVLFRIFVFGYYTTWVI and IIIPLVLLVVGITAIGTFLGL.

The protein belongs to the DPM2 family. As to quaternary structure, component of the dolichol-phosphate mannose (DPM) synthase complex composed of dpm1, dpm2 and dpm3.

The protein localises to the endoplasmic reticulum membrane. It functions in the pathway protein modification; protein glycosylation. Its function is as follows. Regulates the biosynthesis of dolichol phosphate-mannose. Regulatory subunit of the dolichol-phosphate mannose (DPM) synthase complex; essential for the ER localization and stable expression of dpm1. The sequence is that of Dolichol phosphate-mannose biosynthesis regulatory protein (dpm2-1) from Dictyostelium discoideum (Social amoeba).